Reading from the N-terminus, the 224-residue chain is CDP-diacylglycerol--inositol 3-phosphatidyltransferase (224 aa).

Residues 1-8 (MTIAEHDN) lie on the Cytoplasmic side of the membrane. Residues 9–29 (VFIFVPNLIGYARIVLALIAF) traverse the membrane as a helical segment. The Lumenal portion of the chain corresponds to 30–35 (WFMSTN). Residues 36–52 (YVISGWCYVTSALLDAV) form a helical membrane-spanning segment. The Mg(2+) site is built by D50 and D53. Residues 53-76 (DGQAARAFNQSTRFGAMLDQLTDR) are Cytoplasmic-facing. A CDP-1,2-diacyl-sn-glycerol-binding residues include G54, R58, and T64. 2 residues coordinate Mg(2+): D71 and D75. Residue D75 is the Proton acceptor of the active site. The chain crosses the membrane as a helical span at residues 77–97 (CGTTGLLVTLAYFYPRYMFWF). Q98 is a topological domain (lumenal). Residues 99 to 119 (LSIAIDVACHWLFMQTSVVVG) traverse the membrane as a helical segment. Residues 120-138 (RSSHKVNDNFIMRLYYQKD) are Cytoplasmic-facing. The helical transmembrane segment at 139–159 (ILTFMCCVNELFYVCLYLLHF) threads the bilayer. The Lumenal portion of the chain corresponds to 160 to 163 (TYGP). A helical membrane pass occupies residues 164 to 184 (LIFGASLFKILAFLTGPFAVL). At 185–224 (KALISVMHAYVAGIDLAAVDVRERQERRQKSEPVSGKKVE) the chain is on the cytoplasmic side.

The protein belongs to the CDP-alcohol phosphatidyltransferase class-I family. It depends on Mn(2+) as a cofactor. The cofactor is Mg(2+). In adults, expression is higher in the head than in the body (at protein level).

It localises to the apical cell membrane. Its subcellular location is the lateral cell membrane. The catalysed reaction is a CDP-1,2-diacyl-sn-glycerol + myo-inositol = a 1,2-diacyl-sn-glycero-3-phospho-(1D-myo-inositol) + CMP + H(+). In terms of biological role, catalyzes the biosynthesis of phosphatidylinositol (PtdIns) as well as PtdIns:inositol exchange reaction. May thus act to reduce an excessive cellular PtdIns content. The exchange activity is due to the reverse reaction of PtdIns synthase and is dependent on CMP, which is tightly bound to the enzyme. Required for the regeneration of the signaling molecule phosphatidylinositol 4,5-bisphosphate (PtdInsP2) from phosphatidic acid (PA) and maintenance of its steady supply during signaling, thus playing an essential role during phospholipase C-mediated transduction. This function is essential in photoreceptors for light-activated recycling of PtdInsP2 during phototransduction. As a key enzyme of the phosphoinositide pathway, indirectly involved in the polarized secretion of basal membrane (BM) proteins in follicle epithelial (FE) cells through promoting PtdInsP2 synthesis in the apical and lateral plasma membranes of FE cells. PtdInsP2 controls the localization of Crag and perhaps the localization and expression of strat, both of which are essential for restricting the secretion of BM proteins to the basal surface. The sequence is that of CDP-diacylglycerol--inositol 3-phosphatidyltransferase from Drosophila melanogaster (Fruit fly).